The sequence spans 223 residues: MKIAILGGTGDQGFGLALRLAKNNKIIIGSRKKEKAEEAAKKAKEILKQRGIEADIIGLENKDAAKEGDVVILSLPYEYTLSTIKQLKEELKGKIVVSIGVPLATAIGDKPTRLLFPPDGSVAEMVQNVLKESKVVSAFQNVCHAVLEDLDNPVDCDILVCGNDEEAKKVVIDLANQIDGVRAIDCGNLEKSRIIEAITPLLIGLNIKYKSKGTGIRITNLEI.

NADP(+) is bound by residues 9–12, 30–31, K35, L75, and V101; these read TGDQ and SR.

This sequence belongs to the F420-dependent NADP reductase family.

It catalyses the reaction reduced coenzyme F420-(gamma-L-Glu)(n) + NADP(+) = oxidized coenzyme F420-(gamma-L-Glu)(n) + NADPH + 2 H(+). In terms of biological role, catalyzes the reduction of NADP(+) with F420H(2) via hydride transfer, and the reverse reaction, i.e. the reduction of F420 with NADPH. Probably functions in the regeneration of NADPH required in biosynthetic reactions. The sequence is that of F420-dependent NADP reductase (fno) from Methanocaldococcus jannaschii (strain ATCC 43067 / DSM 2661 / JAL-1 / JCM 10045 / NBRC 100440) (Methanococcus jannaschii).